Here is a 188-residue protein sequence, read N- to C-terminus: Ion-translocating oxidoreductase complex subunit B (188 aa).

The tract at residues 1–26 (MNGVFLAIGALLPICLAGGALLGYAA) is hydrophobic. The 4Fe-4S domain maps to 32-90 (QGDPVAEQVNALLPQTQCGQCGYPGCKPYAEAIAAGDKINKCPPGGEATIRALADLLDL). Residues Cys49, Cys52, Cys57, Cys73, Cys113, Cys116, Cys119, Cys123, Cys143, Cys146, Cys149, and Cys153 each contribute to the [4Fe-4S] cluster site. 4Fe-4S ferredoxin-type domains follow at residues 104–133 (RVAY…GAAR) and 134–163 (LMHT…MREI).

The protein belongs to the 4Fe4S bacterial-type ferredoxin family. RnfB subfamily. As to quaternary structure, the complex is composed of six subunits: RnfA, RnfB, RnfC, RnfD, RnfE and RnfG. It depends on [4Fe-4S] cluster as a cofactor.

The protein localises to the cell inner membrane. Its function is as follows. Part of a membrane-bound complex that couples electron transfer with translocation of ions across the membrane. The polypeptide is Ion-translocating oxidoreductase complex subunit B (Pseudomonas aeruginosa (strain LESB58)).